The sequence spans 46 residues: Large ribosomal subunit protein bL34c (46 aa).

Belongs to the bacterial ribosomal protein bL34 family.

It localises to the plastid. The protein localises to the chloroplast. In Pyropia yezoensis (Susabi-nori), this protein is Large ribosomal subunit protein bL34c.